The primary structure comprises 432 residues: Neuropeptide FF receptor 1 (432 aa).

Over 1-43 (MEAEPSQPPNGSWPLGQNGSDVETSMATSLTFSSYYQHSSPVA) the chain is Extracellular. N-linked (GlcNAc...) asparagine glycosylation is found at N10 and N18. The chain crosses the membrane as a helical span at residues 44-64 (AMFIAAYVLIFLLCMVGNTLV). At 65–80 (CFIVLKNRHMRTVTNM) the chain is on the cytoplasmic side. Residues 81 to 101 (FILNLAVSDLLVGIFCMPTTL) traverse the membrane as a helical segment. Residues 102-117 (VDNLITGWPFDNATCK) lie on the Extracellular side of the membrane. Residue N113 is glycosylated (N-linked (GlcNAc...) asparagine). Cysteines 116 and 203 form a disulfide. The helical transmembrane segment at 118 to 138 (MSGLVQGMSVSASVFTLVAIA) threads the bilayer. The Cytoplasmic segment spans residues 139-158 (VERFRCIVHPFREKLTLRKA). The helical transmembrane segment at 159–179 (LFTIAVIWALALLIMCPSAVT) threads the bilayer. Residues 180 to 214 (LTVTREEHHFMLDARNRSYPLYSCWEAWPEKGMRK) lie on the Extracellular side of the membrane. N-linked (GlcNAc...) asparagine glycosylation is present at N195. The chain crosses the membrane as a helical span at residues 215-235 (VYTAVLFAHIYLVPLALIVVM). Residues 236 to 273 (YVRIARKLCQAPGPARDTEEAVAEGGRTSRRRARVVHM) are Cytoplasmic-facing. Residues 274 to 294 (LVMVALFFTLSWLPLWVLLLL) traverse the membrane as a helical segment. Over 295–309 (IDYGELSELQLHLLS) the chain is Extracellular. Residues 310–330 (VYAFPLAHWLAFFHSSANPII) form a helical membrane-spanning segment. At 331-432 (YGYFNENFRR…MPLTIPAWNI (102 aa)) the chain is on the cytoplasmic side. The segment covering 380–406 (PSDSGLPSESGPSSGVPGPGRLPLRNG) has biased composition (low complexity). Positions 380–422 (PSDSGLPSESGPSSGVPGPGRLPLRNGRVAHQDGPGEGPGCNH) are disordered.

It belongs to the G-protein coupled receptor 1 family. In terms of tissue distribution, expressed at high levels in the hypothalamus. Moderate levels found in the midbrain, thalamus, medulla oblongata, testis, eye, whole brain, cerebral cortex, striatum, hippocampus, cerebellum, optic nerve, placenta, spinal cord, pituitary gland and ovary.

It localises to the cell membrane. Functionally, receptor for NPAF (A-18-F-amide) and NPFF (F-8-F-amide) neuropeptides, also known as morphine-modulating peptides. Can also be activated by a variety of naturally occurring or synthetic FMRF-amide like ligands. This receptor mediates its action by association with G proteins that activate a phosphatidylinositol-calcium second messenger system. In Rattus norvegicus (Rat), this protein is Neuropeptide FF receptor 1 (Npffr1).